Consider the following 258-residue polypeptide: 6-carboxyhexanoate--CoA ligase (258 aa).

Belongs to the BioW family. In terms of assembly, homodimer. Mg(2+) is required as a cofactor.

It catalyses the reaction heptanedioate + ATP + CoA = 6-carboxyhexanoyl-CoA + AMP + diphosphate. Its pathway is metabolic intermediate metabolism; pimeloyl-CoA biosynthesis; pimeloyl-CoA from pimelate: step 1/1. Its function is as follows. Catalyzes the transformation of pimelate into pimeloyl-CoA with concomitant hydrolysis of ATP to AMP. The polypeptide is 6-carboxyhexanoate--CoA ligase (Bacillus spizizenii (strain ATCC 23059 / NRRL B-14472 / W23) (Bacillus subtilis subsp. spizizenii)).